A 123-amino-acid chain; its full sequence is uncharacterized protein (123 aa).

The helical transmembrane segment at 34–53 (LPFFFLFLGNLGKFFFLWPL) threads the bilayer.

The protein localises to the membrane. This is an uncharacterized protein from Saccharomyces cerevisiae (strain ATCC 204508 / S288c) (Baker's yeast).